The following is a 125-amino-acid chain: Small ribosomal subunit protein uS13 (125 aa).

The tract at residues 95-125 is disordered; that stretch reads GLPVNGQRTRTNARTRKGVKKTVANKKKATK. Positions 105–125 are enriched in basic residues; sequence TNARTRKGVKKTVANKKKATK.

It belongs to the universal ribosomal protein uS13 family. In terms of assembly, part of the 30S ribosomal subunit. Forms a loose heterodimer with protein S19. Forms two bridges to the 50S subunit in the 70S ribosome.

Functionally, located at the top of the head of the 30S subunit, it contacts several helices of the 16S rRNA. In the 70S ribosome it contacts the 23S rRNA (bridge B1a) and protein L5 of the 50S subunit (bridge B1b), connecting the 2 subunits; these bridges are implicated in subunit movement. Contacts the tRNAs in the A and P-sites. This chain is Small ribosomal subunit protein uS13, found in Leptospira biflexa serovar Patoc (strain Patoc 1 / Ames).